The chain runs to 130 residues: MPLSQEESTLIERATATINSIPISEDYSVASAALSSDGRIFTGVNVYHFTGGPCAELVVLGTAAAAAAGNLTCIVAIGNENRGILSPCGRCRQVLLDLHPGIKAIVKDSDGQPTAVGIRELLPSGYVWEG.

The 129-residue stretch at 1–129 (MPLSQEESTL…ELLPSGYVWE (129 aa)) folds into the CMP/dCMP-type deaminase domain. S28 contacts substrate. C54 contacts Zn(2+). The Proton donor role is filled by E56. R82 is a substrate binding site. C88 and C91 together coordinate Zn(2+). 2 residues coordinate substrate: Y126 and W128.

Belongs to the cytidine and deoxycytidylate deaminase family. As to quaternary structure, homotetramer. Zn(2+) is required as a cofactor.

The catalysed reaction is blasticidin S + H2O + H(+) = deaminohydroxyblasticidin S + NH4(+). Functionally, catalyzes the deamination of the cytosine moiety of the antibiotics blasticidin S, cytomycin and acetylblasticidin S. This chain is Blasticidin-S deaminase (bsd), found in Aspergillus terreus.